The primary structure comprises 301 residues: tRNA-cytidine(32) 2-sulfurtransferase (301 aa).

Positions 47–52 match the PP-loop motif motif; sequence SGGKDS. Cysteine 122, cysteine 125, and cysteine 213 together coordinate [4Fe-4S] cluster.

The protein belongs to the TtcA family. In terms of assembly, homodimer. The cofactor is Mg(2+). It depends on [4Fe-4S] cluster as a cofactor.

The protein localises to the cytoplasm. The catalysed reaction is cytidine(32) in tRNA + S-sulfanyl-L-cysteinyl-[cysteine desulfurase] + AH2 + ATP = 2-thiocytidine(32) in tRNA + L-cysteinyl-[cysteine desulfurase] + A + AMP + diphosphate + H(+). The protein operates within tRNA modification. In terms of biological role, catalyzes the ATP-dependent 2-thiolation of cytidine in position 32 of tRNA, to form 2-thiocytidine (s(2)C32). The sulfur atoms are provided by the cysteine/cysteine desulfurase (IscS) system. This is tRNA-cytidine(32) 2-sulfurtransferase from Photobacterium profundum (strain SS9).